We begin with the raw amino-acid sequence, 459 residues long: V-type ATP synthase beta chain (459 aa).

The protein belongs to the ATPase alpha/beta chains family.

Produces ATP from ADP in the presence of a proton gradient across the membrane. The V-type beta chain is a regulatory subunit. This Thermoanaerobacter sp. (strain X514) protein is V-type ATP synthase beta chain.